A 130-amino-acid chain; its full sequence is Small ribosomal subunit protein uS8 (130 aa).

It belongs to the universal ribosomal protein uS8 family. In terms of assembly, part of the 30S ribosomal subunit.

Functionally, one of the primary rRNA binding proteins, it binds directly to 16S rRNA central domain where it helps coordinate assembly of the platform of the 30S subunit. This Pyrococcus horikoshii (strain ATCC 700860 / DSM 12428 / JCM 9974 / NBRC 100139 / OT-3) protein is Small ribosomal subunit protein uS8.